Reading from the N-terminus, the 268-residue chain is UPF0354 protein OB2234 (268 aa).

This sequence belongs to the UPF0354 family.

The polypeptide is UPF0354 protein OB2234 (Oceanobacillus iheyensis (strain DSM 14371 / CIP 107618 / JCM 11309 / KCTC 3954 / HTE831)).